The primary structure comprises 125 residues: Holo-[acyl-carrier-protein] synthase (125 aa).

Positions 8 and 57 each coordinate Mg(2+).

The protein belongs to the P-Pant transferase superfamily. AcpS family. It depends on Mg(2+) as a cofactor.

It is found in the cytoplasm. It carries out the reaction apo-[ACP] + CoA = holo-[ACP] + adenosine 3',5'-bisphosphate + H(+). Functionally, transfers the 4'-phosphopantetheine moiety from coenzyme A to a Ser of acyl-carrier-protein. This chain is Holo-[acyl-carrier-protein] synthase, found in Thermus thermophilus (strain ATCC BAA-163 / DSM 7039 / HB27).